Here is a 37-residue protein sequence, read N- to C-terminus: Cytochrome b6-f complex subunit 5 (37 aa).

A helical transmembrane segment spans residues 5–25 (FLLGIILGLIPITLIGLFVTA).

Belongs to the PetG family. As to quaternary structure, the 4 large subunits of the cytochrome b6-f complex are cytochrome b6, subunit IV (17 kDa polypeptide, PetD), cytochrome f and the Rieske protein, while the 4 small subunits are PetG, PetL, PetM and PetN. The complex functions as a dimer.

It localises to the plastid membrane. Component of the cytochrome b6-f complex, which mediates electron transfer between photosystem II (PSII) and photosystem I (PSI), cyclic electron flow around PSI, and state transitions. PetG is required for either the stability or assembly of the cytochrome b6-f complex. This Cuscuta obtusiflora (Peruvian dodder) protein is Cytochrome b6-f complex subunit 5.